Reading from the N-terminus, the 301-residue chain is Homoserine O-acetyltransferase (301 aa).

The active-site Acyl-thioester intermediate is the Cys142. 2 residues coordinate substrate: Lys163 and Ser192. The active-site Proton acceptor is His235. Glu237 is an active-site residue. Arg249 is a substrate binding site.

This sequence belongs to the MetA family.

The protein localises to the cytoplasm. It catalyses the reaction L-homoserine + acetyl-CoA = O-acetyl-L-homoserine + CoA. Its pathway is amino-acid biosynthesis; L-methionine biosynthesis via de novo pathway; O-acetyl-L-homoserine from L-homoserine: step 1/1. Its function is as follows. Transfers an acetyl group from acetyl-CoA to L-homoserine, forming acetyl-L-homoserine. This is Homoserine O-acetyltransferase from Bacillus cereus (strain ZK / E33L).